We begin with the raw amino-acid sequence, 349 residues long: DNA-directed RNA polymerase subunit alpha (349 aa).

The interval M1–N226 is alpha N-terminal domain (alpha-NTD). The alpha C-terminal domain (alpha-CTD) stretch occupies residues A241–Y349. The disordered stretch occupies residues K309–Y349. Acidic residues predominate over residues P336–Y349.

It belongs to the RNA polymerase alpha chain family. As to quaternary structure, homodimer. The RNAP catalytic core consists of 2 alpha, 1 beta, 1 beta' and 1 omega subunit. When a sigma factor is associated with the core the holoenzyme is formed, which can initiate transcription.

The catalysed reaction is RNA(n) + a ribonucleoside 5'-triphosphate = RNA(n+1) + diphosphate. Its function is as follows. DNA-dependent RNA polymerase catalyzes the transcription of DNA into RNA using the four ribonucleoside triphosphates as substrates. The chain is DNA-directed RNA polymerase subunit alpha from Frankia casuarinae (strain DSM 45818 / CECT 9043 / HFP020203 / CcI3).